We begin with the raw amino-acid sequence, 52 residues long: Light-harvesting protein B-880 alpha chain (52 aa).

Topologically, residues 1-12 (MWKVWLLFDPRR) are cytoplasmic. A helical membrane pass occupies residues 13–33 (TLVALFTFLFVLALLIHFILL). Residue His29 coordinates a bacteriochlorophyll. Over 34 to 52 (STDRFNWMQGAPTAPAQTS) the chain is Periplasmic.

Belongs to the antenna complex alpha subunit family. The core complex is formed by different alpha and beta chains, binding bacteriochlorophyll molecules, and arranged most probably in tetrameric structures disposed around the reaction center. The non-pigmented gamma chains may constitute additional components.

It is found in the cell inner membrane. Its function is as follows. Antenna complexes are light-harvesting systems, which transfer the excitation energy to the reaction centers. In Afifella marina (Rhodobium marinum), this protein is Light-harvesting protein B-880 alpha chain.